The following is a 263-amino-acid chain: MIVGQHIPGTSYLHRSSAVAKIIFAFCFIPLVFLANNAATNIFLLLFTFFALASSKLPIRYVLKGLRPILFLIIFTFIIQLLFTREGAVLFEFGWFKIYEEGLRLAIIVSLRFFYLVSITTLVTLTTSPIELTDAIELLLKPFKVVRVPTHEIALMLSISLRFLPTLAEETEKIMKAQQARGVDLSAGPIKERLRAIIPLLIPLFISAFKRAEDLATAMEARGYRGGEGRTRLRESKWTTRDTGLILLLVALGLLLVYLRGGF.

4 helical membrane passes run 22–42 (IIFA…ATNI), 69–89 (ILFL…EGAV), 105–125 (LAII…LVTL), and 243–263 (TGLI…RGGF).

It belongs to the energy-coupling factor EcfT family. Forms a stable energy-coupling factor (ECF) transporter complex composed of 2 membrane-embedded substrate-binding proteins (S component), 2 ATP-binding proteins (A component) and 2 transmembrane proteins (T component). May be able to interact with more than 1 S component at a time.

The protein resides in the cell membrane. Its function is as follows. Transmembrane (T) component of an energy-coupling factor (ECF) ABC-transporter complex. Unlike classic ABC transporters this ECF transporter provides the energy necessary to transport a number of different substrates. The polypeptide is Energy-coupling factor transporter transmembrane protein EcfT (Exiguobacterium sibiricum (strain DSM 17290 / CCUG 55495 / CIP 109462 / JCM 13490 / 255-15)).